A 277-amino-acid polypeptide reads, in one-letter code: 4-hydroxy-3-methylbut-2-enyl diphosphate reductase (277 aa).

C12 is a binding site for [4Fe-4S] cluster. The (2E)-4-hydroxy-3-methylbut-2-enyl diphosphate site is built by H36 and H70. Residues H36 and H70 each coordinate dimethylallyl diphosphate. Residues H36 and H70 each contribute to the isopentenyl diphosphate site. Position 92 (C92) interacts with [4Fe-4S] cluster. Residue H120 coordinates (2E)-4-hydroxy-3-methylbut-2-enyl diphosphate. A dimethylallyl diphosphate-binding site is contributed by H120. H120 provides a ligand contact to isopentenyl diphosphate. Residue E122 is the Proton donor of the active site. Residue T158 coordinates (2E)-4-hydroxy-3-methylbut-2-enyl diphosphate. C186 contributes to the [4Fe-4S] cluster binding site. (2E)-4-hydroxy-3-methylbut-2-enyl diphosphate is bound by residues S214, N216, and S258. Dimethylallyl diphosphate is bound by residues S214, N216, and S258. Isopentenyl diphosphate contacts are provided by S214, N216, and S258.

It belongs to the IspH family. It depends on [4Fe-4S] cluster as a cofactor.

It carries out the reaction isopentenyl diphosphate + 2 oxidized [2Fe-2S]-[ferredoxin] + H2O = (2E)-4-hydroxy-3-methylbut-2-enyl diphosphate + 2 reduced [2Fe-2S]-[ferredoxin] + 2 H(+). The catalysed reaction is dimethylallyl diphosphate + 2 oxidized [2Fe-2S]-[ferredoxin] + H2O = (2E)-4-hydroxy-3-methylbut-2-enyl diphosphate + 2 reduced [2Fe-2S]-[ferredoxin] + 2 H(+). It functions in the pathway isoprenoid biosynthesis; dimethylallyl diphosphate biosynthesis; dimethylallyl diphosphate from (2E)-4-hydroxy-3-methylbutenyl diphosphate: step 1/1. The protein operates within isoprenoid biosynthesis; isopentenyl diphosphate biosynthesis via DXP pathway; isopentenyl diphosphate from 1-deoxy-D-xylulose 5-phosphate: step 6/6. In terms of biological role, catalyzes the conversion of 1-hydroxy-2-methyl-2-(E)-butenyl 4-diphosphate (HMBPP) into a mixture of isopentenyl diphosphate (IPP) and dimethylallyl diphosphate (DMAPP). Acts in the terminal step of the DOXP/MEP pathway for isoprenoid precursor biosynthesis. This is 4-hydroxy-3-methylbut-2-enyl diphosphate reductase from Campylobacter jejuni subsp. jejuni serotype O:6 (strain 81116 / NCTC 11828).